A 102-amino-acid polypeptide reads, in one-letter code: uncharacterized protein (102 aa).

The segment at 1-43 (MNNAHEENISSVTGFKSTSGSPAIGSSLPGRSGEGRSSSSSSG) is disordered. Positions 9-21 (ISSVTGFKSTSGS) are enriched in polar residues. Residues 25-43 (GSSLPGRSGEGRSSSSSSG) show a composition bias toward low complexity.

This is an uncharacterized protein from Saccharomyces cerevisiae (strain ATCC 204508 / S288c) (Baker's yeast).